The primary structure comprises 137 residues: MSKVPRNFRLLEELEKGEKGFGPESCSYGLADSDDITMTKWNGTILGPPHSNHENRIYSLSIDCGPNYPDSPPKVTFISKINLPCVNPTTGEVQTDFHTLRDWKRAYTMETLLLDLRKEMATPANKKLRQPKEGETF.

In terms of domain architecture, UBC core spans 5 to 137; that stretch reads PRNFRLLEEL…LRQPKEGETF (133 aa). At S71 the chain carries Phosphoserine.

This sequence belongs to the ubiquitin-conjugating enzyme family. Heterodimer with UBC13.

In terms of biological role, has a role in the DNA error-free postreplication repair (PRR) pathway. Lacks catalytic activity by itself. The UBC13/MMS2 heterodimer catalyzes the synthesis of non-canonical poly-ubiquitin chains that are linked through 'Lys-63'. The sequence is that of Ubiquitin-conjugating enzyme variant MMS2 (MMS2) from Saccharomyces cerevisiae (strain ATCC 204508 / S288c) (Baker's yeast).